The chain runs to 398 residues: Phosphoglycerate kinase (398 aa).

Residues 23–25 (DLN), Arg-38, 61–64 (HFGR), Arg-119, and Arg-152 each bind substrate. ATP-binding positions include Lys-202, Glu-324, and 354-357 (GGDT).

The protein belongs to the phosphoglycerate kinase family. Monomer.

The protein localises to the cytoplasm. It carries out the reaction (2R)-3-phosphoglycerate + ATP = (2R)-3-phospho-glyceroyl phosphate + ADP. The protein operates within carbohydrate degradation; glycolysis; pyruvate from D-glyceraldehyde 3-phosphate: step 2/5. This Rhodopseudomonas palustris (strain ATCC BAA-98 / CGA009) protein is Phosphoglycerate kinase.